The following is a 282-amino-acid chain: 4-diphosphocytidyl-2-C-methyl-D-erythritol kinase (282 aa).

Residue lysine 9 is part of the active site. 98–108 (PMGGGLGGGSS) serves as a coordination point for ATP. Aspartate 140 is an active-site residue.

This sequence belongs to the GHMP kinase family. IspE subfamily. As to quaternary structure, homodimer.

The enzyme catalyses 4-CDP-2-C-methyl-D-erythritol + ATP = 4-CDP-2-C-methyl-D-erythritol 2-phosphate + ADP + H(+). Its pathway is isoprenoid biosynthesis; isopentenyl diphosphate biosynthesis via DXP pathway; isopentenyl diphosphate from 1-deoxy-D-xylulose 5-phosphate: step 3/6. In terms of biological role, catalyzes the phosphorylation of the position 2 hydroxy group of 4-diphosphocytidyl-2C-methyl-D-erythritol. The sequence is that of 4-diphosphocytidyl-2-C-methyl-D-erythritol kinase from Salmonella paratyphi A (strain ATCC 9150 / SARB42).